A 669-amino-acid chain; its full sequence is Cytokinesis protein 2 (669 aa).

The F-BAR domain occupies 1–261; that stretch reads MSYSYEACFW…HLNSFTAADE (261 aa). The stretch at 134-200 forms a coiled coil; it reads KKGCEVLQKK…LKQEYKASQK (67 aa). Phosphoserine is present on residues Ser-337 and Ser-366. A disordered region spans residues 372-518; sequence VQLQSNVDDS…DYNTRRDTST (147 aa). Composition is skewed to basic and acidic residues over residues 381–391 and 397–413; these read SVLRQKPDKPR and EQLKPDEDSKNPDEKGL. Ser-421 is subject to Phosphoserine. Composition is skewed to low complexity over residues 421–431 and 445–455; these read SLSSPSESSSS and MESMTTSVSSM. Residues 599–667 enclose the SH3 domain; that stretch reads PVIEYAKAMY…PYNFIQLLHQ (69 aa).

Interacts with INN1.

Its subcellular location is the cytoplasm. It localises to the cytoskeleton. It is found in the bud neck. In terms of biological role, throughout most of the cell cycle it forms a double ring that coincides with the septins. After the onset of mitosis, forms a ring-like structure which colocalizes with the medial actin ring. Mediates cytoskeletal rearrangements required for cytokinesis. In conjunction with the medial actin ring exhibits contraction-like action. The sequence is that of Cytokinesis protein 2 (HOF1) from Saccharomyces cerevisiae (strain ATCC 204508 / S288c) (Baker's yeast).